The chain runs to 346 residues: MFNVSALRAATPSIASVSSVASPSEQHGLSTSVGVGVNDTTSRTGDGGAASSASSASAAPQQQSQSALHNKLEAKWDTLLPTDTNLQCSTWPDSIPLLAGYSATPTFSFDPCTYGSYDPSAYFASNGIAGSMYTLPDQFPRSENDMLDNSNTSNGNKSDKDGIKLEDEDEILEDEENDEEDDGTGKRKKRKRRVLFTKAQTYELERRFRSQKYLSAPEREALAMQIRLTPTQVKIWFQNHRYKTKKSHTDKPINAALLTTMPNAFSSQSTAASFPTRAMPIPMLVRDSSARSSDISSTSPYTVAFGSANSGYLPTPSAYLPATSGYFSNGPSAASSYMTNTQWWPS.

Disordered regions lie at residues 1–68 (MFNV…QSAL) and 135–190 (LPDQ…RKKR). Low complexity predominate over residues 9 to 24 (AATPSIASVSSVASPS). Residues 25 to 44 (EQHGLSTSVGVGVNDTTSRT) show a composition bias toward polar residues. Residues 49–67 (AASSASSASAAPQQQSQSA) are compositionally biased toward low complexity. Over residues 147–156 (LDNSNTSNGN) the composition is skewed to polar residues. Over residues 166–182 (EDEDEILEDEENDEEDD) the composition is skewed to acidic residues. The segment at residues 189 to 248 (KRKRRVLFTKAQTYELERRFRSQKYLSAPEREALAMQIRLTPTQVKIWFQNHRYKTKKSH) is a DNA-binding region (homeobox).

The protein belongs to the NK-2 homeobox family.

The protein localises to the nucleus. Its function is as follows. Involved in combinatorial activation of gene expression in pharyngeal muscle. Specifically binds a site necessary for activity of the B subelement of myo-2 enhancer. In terms of biological role, regulates distal tip cell fate. The sequence is that of Homeobox protein ceh-22 (ceh-22) from Caenorhabditis elegans.